We begin with the raw amino-acid sequence, 328 residues long: Malate dehydrogenase (328 aa).

11 to 17 (GAAGQIG) lines the NAD(+) pocket. Positions 94 and 100 each coordinate substrate. NAD(+) is bound by residues asparagine 107, glutamine 114, and 131–133 (VGN). Substrate is bound by residues asparagine 133 and arginine 164. Histidine 189 (proton acceptor) is an active-site residue.

This sequence belongs to the LDH/MDH superfamily. MDH type 2 family.

The catalysed reaction is (S)-malate + NAD(+) = oxaloacetate + NADH + H(+). Catalyzes the reversible oxidation of malate to oxaloacetate. This is Malate dehydrogenase from Xanthomonas euvesicatoria pv. vesicatoria (strain 85-10) (Xanthomonas campestris pv. vesicatoria).